A 379-amino-acid chain; its full sequence is Cobalt-precorrin-5B C(1)-methyltransferase (379 aa).

It belongs to the CbiD family.

It catalyses the reaction Co-precorrin-5B + S-adenosyl-L-methionine = Co-precorrin-6A + S-adenosyl-L-homocysteine. Its pathway is cofactor biosynthesis; adenosylcobalamin biosynthesis; cob(II)yrinate a,c-diamide from sirohydrochlorin (anaerobic route): step 6/10. Its function is as follows. Catalyzes the methylation of C-1 in cobalt-precorrin-5B to form cobalt-precorrin-6A. The sequence is that of Cobalt-precorrin-5B C(1)-methyltransferase from Salmonella typhi.